The sequence spans 35 residues: Photosystem II reaction center protein T (35 aa).

The helical transmembrane segment at 3–23 (ALVYTFLLVSTLGIIFFAIFF) threads the bilayer.

This sequence belongs to the PsbT family. PSII is composed of 1 copy each of membrane proteins PsbA, PsbB, PsbC, PsbD, PsbE, PsbF, PsbH, PsbI, PsbJ, PsbK, PsbL, PsbM, PsbT, PsbY, PsbZ, Psb30/Ycf12, at least 3 peripheral proteins of the oxygen-evolving complex and a large number of cofactors. It forms dimeric complexes.

It is found in the plastid. Its subcellular location is the chloroplast thylakoid membrane. In terms of biological role, found at the monomer-monomer interface of the photosystem II (PS II) dimer, plays a role in assembly and dimerization of PSII. PSII is a light-driven water plastoquinone oxidoreductase, using light energy to abstract electrons from H(2)O, generating a proton gradient subsequently used for ATP formation. This Schisandra chinensis (Chinese magnolia vine) protein is Photosystem II reaction center protein T.